Consider the following 731-residue polypeptide: Anaphase-promoting complex subunit 2 (731 aa).

The protein belongs to the cullin family. The APC/C is probably composed of at least 12 subunits: apc-2, apc-10, apc-11, cdc-26, emb-1, emb-27, emb-30, mat-1, mat-2, mat-3, such-1 and gfi-3.

It participates in protein modification; protein ubiquitination. Its function is as follows. Probable component of the anaphase promoting complex/cyclosome (APC/C), a cell cycle-regulated ubiquitin ligase that controls progression through mitosis and the G1 phase of the cell cycle. The APC/C complex acts by mediating ubiquitination and subsequent degradation of target proteins. Developmental role in early embryogenesis and the metaphase to anaphase transition in meiosis and mitosis. The chain is Anaphase-promoting complex subunit 2 from Caenorhabditis elegans.